The following is a 453-amino-acid chain: Trigger factor (453 aa).

The 86-residue stretch at 171–256 (GDRVTVSFKG…ATLVEAPKDT (86 aa)) folds into the PPIase FKBP-type domain.

The protein belongs to the FKBP-type PPIase family. Tig subfamily.

It is found in the cytoplasm. The catalysed reaction is [protein]-peptidylproline (omega=180) = [protein]-peptidylproline (omega=0). In terms of biological role, involved in protein export. Acts as a chaperone by maintaining the newly synthesized protein in an open conformation. Functions as a peptidyl-prolyl cis-trans isomerase. This Rhodopseudomonas palustris (strain BisA53) protein is Trigger factor.